The sequence spans 572 residues: Hemolysin-1 (572 aa).

Functionally, bacterial hemolysins are exotoxins that attack blood cell membranes and cause cell rupture by mechanisms not clearly defined. This chain is Hemolysin-1 (ash1), found in Aeromonas salmonicida.